The following is a 621-amino-acid chain: tRNA uridine 5-carboxymethylaminomethyl modification enzyme MnmG (621 aa).

9-14 is a binding site for FAD; it reads GGGHAG. 270 to 284 provides a ligand contact to NAD(+); the sequence is GPRYCPSIEDKIVKF.

The protein belongs to the MnmG family. Homodimer. Heterotetramer of two MnmE and two MnmG subunits. It depends on FAD as a cofactor.

It localises to the cytoplasm. Functionally, NAD-binding protein involved in the addition of a carboxymethylaminomethyl (cmnm) group at the wobble position (U34) of certain tRNAs, forming tRNA-cmnm(5)s(2)U34. The sequence is that of tRNA uridine 5-carboxymethylaminomethyl modification enzyme MnmG from Borreliella burgdorferi (strain ATCC 35210 / DSM 4680 / CIP 102532 / B31) (Borrelia burgdorferi).